The sequence spans 175 residues: Gamma-crystallin M1 (175 aa).

Beta/gamma crystallin 'Greek key' domains follow at residues 2–40, 41–86, 89–121, and 130–172; these read GKII…RVES, GCFM…RYPY, FRMR…RMSD, and GHWL…RRIT.

It belongs to the beta/gamma-crystallin family. Monomer.

In terms of biological role, crystallins are the dominant structural components of the vertebrate eye lens. This Chiloscyllium indicum (Slender bamboo shark) protein is Gamma-crystallin M1 (GM1).